Reading from the N-terminus, the 447-residue chain is MREIVHVQAGQCGNQIGSKFWEVISDEHGIDPTGSYHGDSDLQLERINCYFNEATGGRYVPRAILMDLEPGTMDSVRAGPFGQLFRPDNFVFGQTGAGNNWAKGHYTEGAELIDSVLDVVRKEAESCDALQGFQLTHSMGGGTGAGMGTLLISKVREEYPDRVMSTYSVIPSPKVSDTVVEPYNATLSVHQLVENADQCFTLDNEALYDICFRTLKLTTPTYGDLNHLVSAAICGTTCSLRFPGQLNCDLRKLAVNMVPFPRLHFFMIGFAPLTSRGSQQYRALTVPELTQQCFDSKNMMCAADPRHGRYLTCAVMFRGRMSTKEVDEQMLNVVNKNSSYFVEWIPNNVKASICDIPPKGLKMSTTFVGNTTAIQEVWKRVAEQFTSMFRRKAFLHWYTGEGMDEMEFTEAESNMNDLVSEYQQYQDATAEEEGEFDEDEELDDAMG.

GTP contacts are provided by glutamine 11, glutamate 69, serine 138, glycine 142, threonine 143, glycine 144, asparagine 204, and asparagine 226. A Mg(2+)-binding site is contributed by glutamate 69. The tract at residues 424–447 (QYQDATAEEEGEFDEDEELDDAMG) is disordered. A compositionally biased stretch (acidic residues) spans 429-447 (TAEEEGEFDEDEELDDAMG).

Belongs to the tubulin family. As to quaternary structure, dimer of alpha and beta chains. A typical microtubule is a hollow water-filled tube with an outer diameter of 25 nm and an inner diameter of 15 nM. Alpha-beta heterodimers associate head-to-tail to form protofilaments running lengthwise along the microtubule wall with the beta-tubulin subunit facing the microtubule plus end conferring a structural polarity. Microtubules usually have 13 protofilaments but different protofilament numbers can be found in some organisms and specialized cells. The cofactor is Mg(2+).

The protein resides in the cytoplasm. Its subcellular location is the cytoskeleton. In terms of biological role, tubulin is the major constituent of microtubules, a cylinder consisting of laterally associated linear protofilaments composed of alpha- and beta-tubulin heterodimers. Microtubules grow by the addition of GTP-tubulin dimers to the microtubule end, where a stabilizing cap forms. Below the cap, tubulin dimers are in GDP-bound state, owing to GTPase activity of alpha-tubulin. The protein is Tubulin beta-5 chain (TUBB5) of Ectocarpus variabilis (Brown alga).